The following is a 611-amino-acid chain: Threonine--tRNA ligase (611 aa).

Residues 1–27 are disordered; the sequence is MAGPEPEPVSSAAATTPAPSAPVVLPK. The segment covering 8 to 24 has biased composition (low complexity); the sequence is PVSSAAATTPAPSAPVV. A catalytic region spans residues 209–502; the sequence is DHRRIGKDLD…MTENYAGDYP (294 aa). Zn(2+)-binding residues include Cys-302, His-353, and His-479.

Belongs to the class-II aminoacyl-tRNA synthetase family. In terms of assembly, homodimer. The cofactor is Zn(2+).

Its subcellular location is the cytoplasm. The enzyme catalyses tRNA(Thr) + L-threonine + ATP = L-threonyl-tRNA(Thr) + AMP + diphosphate + H(+). Functionally, catalyzes the attachment of threonine to tRNA(Thr) in a two-step reaction: L-threonine is first activated by ATP to form Thr-AMP and then transferred to the acceptor end of tRNA(Thr). Also edits incorrectly charged L-seryl-tRNA(Thr). The chain is Threonine--tRNA ligase from Synechococcus sp. (strain CC9605).